A 316-amino-acid chain; its full sequence is Methionyl-tRNA formyltransferase (316 aa).

A (6S)-5,6,7,8-tetrahydrofolate-binding site is contributed by 109–112 (SLLP).

The protein belongs to the Fmt family.

The catalysed reaction is L-methionyl-tRNA(fMet) + (6R)-10-formyltetrahydrofolate = N-formyl-L-methionyl-tRNA(fMet) + (6S)-5,6,7,8-tetrahydrofolate + H(+). Functionally, attaches a formyl group to the free amino group of methionyl-tRNA(fMet). The formyl group appears to play a dual role in the initiator identity of N-formylmethionyl-tRNA by promoting its recognition by IF2 and preventing the misappropriation of this tRNA by the elongation apparatus. In Idiomarina loihiensis (strain ATCC BAA-735 / DSM 15497 / L2-TR), this protein is Methionyl-tRNA formyltransferase.